The following is a 569-amino-acid chain: 2-isopropylmalate synthase (569 aa).

One can recognise a Pyruvate carboxyltransferase domain in the interval 31 to 305 (PRWMSTDLRD…APELDFSDID (275 aa)). Aspartate 40, histidine 244, histidine 246, and asparagine 280 together coordinate Mg(2+). The segment at 437–569 (RETPLRYVSH…TASASAATEA (133 aa)) is regulatory domain.

This sequence belongs to the alpha-IPM synthase/homocitrate synthase family. LeuA type 2 subfamily. Homodimer. Mg(2+) serves as cofactor.

The protein localises to the cytoplasm. The catalysed reaction is 3-methyl-2-oxobutanoate + acetyl-CoA + H2O = (2S)-2-isopropylmalate + CoA + H(+). The protein operates within amino-acid biosynthesis; L-leucine biosynthesis; L-leucine from 3-methyl-2-oxobutanoate: step 1/4. Its function is as follows. Catalyzes the condensation of the acetyl group of acetyl-CoA with 3-methyl-2-oxobutanoate (2-ketoisovalerate) to form 3-carboxy-3-hydroxy-4-methylpentanoate (2-isopropylmalate). This Cupriavidus taiwanensis (strain DSM 17343 / BCRC 17206 / CCUG 44338 / CIP 107171 / LMG 19424 / R1) (Ralstonia taiwanensis (strain LMG 19424)) protein is 2-isopropylmalate synthase.